The sequence spans 467 residues: Probable amino acid permease 7 (467 aa).

The Cytoplasmic segment spans residues 1–29 (MDIKEDDESRVITPTELQLHDSVTARTGT). Residues 30-50 (LWTAVAHIITGVIGAGVLSLA) form a helical membrane-spanning segment. Residues 51–58 (WATAELGW) are Extracellular-facing. A helical membrane pass occupies residues 59-79 (IAGPAALIAFAGVTLLSAFLL). The Cytoplasmic portion of the chain corresponds to 80-111 (SDCYRFPDPNNGPLRLNSYSQAVKLYLGKKNE). The helical transmembrane segment at 112-132 (IVCGVVVYISLFGCGIAYTIV) threads the bilayer. The Extracellular segment spans residues 133-163 (IATCSRAIMKSNCYHRNGHNATCSYGDNNNY). The next 2 membrane-spanning stretches (helical) occupy residues 164-184 (FMVLFGLTQIFMSQIPNFHNM) and 185-205 (VWLSLVAAIMSFTYSFIGIGL). The Extracellular segment spans residues 206–231 (ALGKIIENRKIEGSIRGIPAENRGEK). The chain crosses the membrane as a helical span at residues 232–252 (VWIVFQALGNIAFSYPFSIIL). Residues 253–274 (LEIQDTLRSPPAEKQTMKKAST) are Cytoplasmic-facing. Residues 275–295 (VAVFIQTFFFFCCGCFGYAAF) traverse the membrane as a helical segment. The Extracellular portion of the chain corresponds to 296–312 (GDSTPGNLLTGFGFYEP). Residues 313-333 (FWLVDFANACIVLHLVGGYQV) traverse the membrane as a helical segment. Over 334–383 (YSQPIFAAAERSLTKKYPENKFIARFYGFKLPLLRGETVRLNPMRMCLRT) the chain is Cytoplasmic. The next 2 helical transmembrane spans lie at 384–404 (MYVLITTGVAVMFPYFNEVLG) and 405–425 (VVGALAFWPLAVYFPVEMCIL). Over 426–443 (QKKIRSWTRPWLLLRGFS) the chain is Cytoplasmic. The helical transmembrane segment at 444–464 (FVCLLVCLLSLVGSIYGLVGA) threads the bilayer. Residues 465–467 (KFG) are Extracellular-facing.

It belongs to the amino acid/polyamine transporter 2 family. Amino acid/auxin permease (AAAP) (TC 2.A.18.2) subfamily.

Its subcellular location is the cell membrane. In terms of biological role, amino acid-proton symporter. Stereospecific transporter with a broad specificity for neutral amino acids. The chain is Probable amino acid permease 7 (AAP7) from Arabidopsis thaliana (Mouse-ear cress).